The sequence spans 30 residues: Toxic protein AapA1 (30 aa).

This sequence belongs to the AapA toxin family.

Its subcellular location is the cell inner membrane. Its activity is regulated as follows. Transcription of the aapA1 gene generates a full-length transcript whose folding impedes translation. Processing of the 3' end of the aapA1 message generates a shorter transcript that becomes translatable after a structural rearrangement. The processing also makes it more susceptible to forming dsRNA with IsoA1 which leads to duplex RNA degradation by RNase 3 (rnc). Functionally, may be involved in response to oxidative stress. Toxic component of a type I toxin-antitoxin (TA) system. When overexpression is induced in situ in the absence of its cognate antisense RNA antitoxin IsoA1 it leads to cell growth arrest and cell death without lysis. Neutralized by IsoA1 RNA which forms an extensive duplex with the mRNA. Binds artificial prokaryotic and eukaryotic lipid membranes, with 30-fold higher affinity for prokaryotic membranes. Molecular dynamics suggests the peptide penetrates the membrane leading to lipid reorganization and thinning of the bilayer. Induction of toxin in the absence of antitoxin RNA causes a fast conversion of cells from spiral-shaped to coccoid forms; cells have no visible membrane defects and resemble wild-type 'aging coccoids'. Toxin causes a moderate decrease in membrane potential and ATP content and alterations in peptidoglycan muropeptide abundance; GlcNAc-MurNAc dipeptides increase while GlcNAc-MurNAc tripeptides decrease (i.e. a faster phenocopy of cell aging). Deletion of all 6 AapA/IsoA TA loci in strain B128 leads to slower than wild-type conversion of H2O2-treated cells to the coccoid form. This suggests oxidative stress triggers coccoid transformation via these type I TA systems, although other factors eventually drive the morphology change. The chain is Toxic protein AapA1 from Helicobacter pylori (strain ATCC 700392 / 26695) (Campylobacter pylori).